We begin with the raw amino-acid sequence, 78 residues long: Small ribosomal subunit protein bS18 (78 aa).

The protein belongs to the bacterial ribosomal protein bS18 family. As to quaternary structure, part of the 30S ribosomal subunit. Forms a tight heterodimer with protein bS6.

Its function is as follows. Binds as a heterodimer with protein bS6 to the central domain of the 16S rRNA, where it helps stabilize the platform of the 30S subunit. This is Small ribosomal subunit protein bS18 from Pseudothermotoga lettingae (strain ATCC BAA-301 / DSM 14385 / NBRC 107922 / TMO) (Thermotoga lettingae).